The chain runs to 459 residues: Bifunctional protein GlmU (459 aa).

Residues 1–229 form a pyrophosphorylase region; that stretch reads MSNFAIILAA…FDESLGVNDR (229 aa). Residues 8–11, Lys-22, Gln-72, and 77–78 contribute to the UDP-N-acetyl-alpha-D-glucosamine site; these read LAAG and GT. Residue Asp-102 participates in Mg(2+) binding. UDP-N-acetyl-alpha-D-glucosamine is bound by residues Gly-139, Glu-154, Asn-169, and Asn-227. Asn-227 is a Mg(2+) binding site. The segment at 230–250 is linker; sequence VALATAESVMRRRINHKHMVN. The N-acetyltransferase stretch occupies residues 251-459; the sequence is GVSFVNPEAT…TRLPHHPKNQ (209 aa). 2 residues coordinate UDP-N-acetyl-alpha-D-glucosamine: Arg-332 and Lys-350. Catalysis depends on His-362, which acts as the Proton acceptor. UDP-N-acetyl-alpha-D-glucosamine is bound by residues Tyr-365 and Asn-376. Acetyl-CoA contacts are provided by residues Ala-379, 385-386, Ser-404, Ala-422, and Arg-439; that span reads NY.

In the N-terminal section; belongs to the N-acetylglucosamine-1-phosphate uridyltransferase family. This sequence in the C-terminal section; belongs to the transferase hexapeptide repeat family. In terms of assembly, homotrimer. Mg(2+) serves as cofactor.

It is found in the cytoplasm. The enzyme catalyses alpha-D-glucosamine 1-phosphate + acetyl-CoA = N-acetyl-alpha-D-glucosamine 1-phosphate + CoA + H(+). The catalysed reaction is N-acetyl-alpha-D-glucosamine 1-phosphate + UTP + H(+) = UDP-N-acetyl-alpha-D-glucosamine + diphosphate. The protein operates within nucleotide-sugar biosynthesis; UDP-N-acetyl-alpha-D-glucosamine biosynthesis; N-acetyl-alpha-D-glucosamine 1-phosphate from alpha-D-glucosamine 6-phosphate (route II): step 2/2. It participates in nucleotide-sugar biosynthesis; UDP-N-acetyl-alpha-D-glucosamine biosynthesis; UDP-N-acetyl-alpha-D-glucosamine from N-acetyl-alpha-D-glucosamine 1-phosphate: step 1/1. It functions in the pathway bacterial outer membrane biogenesis; LPS lipid A biosynthesis. Its function is as follows. Catalyzes the last two sequential reactions in the de novo biosynthetic pathway for UDP-N-acetylglucosamine (UDP-GlcNAc). The C-terminal domain catalyzes the transfer of acetyl group from acetyl coenzyme A to glucosamine-1-phosphate (GlcN-1-P) to produce N-acetylglucosamine-1-phosphate (GlcNAc-1-P), which is converted into UDP-GlcNAc by the transfer of uridine 5-monophosphate (from uridine 5-triphosphate), a reaction catalyzed by the N-terminal domain. This is Bifunctional protein GlmU from Streptococcus pneumoniae (strain Hungary19A-6).